The sequence spans 713 residues: Polyribonucleotide nucleotidyltransferase (713 aa).

Mg(2+)-binding residues include Asp487 and Asp493. The KH domain maps to 554-613 (PRIEVMNIPVDKIREVIGSGGKVIREIVEKTGAKINIEDDGTVKIASASGKEIEAARKWI). One can recognise an S1 motif domain in the interval 623–691 (GQIYEGTVVK…ERGKVRLSMK (69 aa)).

The protein belongs to the polyribonucleotide nucleotidyltransferase family. Requires Mg(2+) as cofactor.

The protein resides in the cytoplasm. The catalysed reaction is RNA(n+1) + phosphate = RNA(n) + a ribonucleoside 5'-diphosphate. In terms of biological role, involved in mRNA degradation. Catalyzes the phosphorolysis of single-stranded polyribonucleotides processively in the 3'- to 5'-direction. In Agrobacterium fabrum (strain C58 / ATCC 33970) (Agrobacterium tumefaciens (strain C58)), this protein is Polyribonucleotide nucleotidyltransferase.